Consider the following 356-residue polypeptide: Protein MGF 360-10L (356 aa).

The ANK repeat unit spans residues 57–89; it reads DLNTALMLATKENNYQLIKMFTDWGADINYGLI. A glycan (N-linked (GlcNAc...) asparagine; by host) is linked at Asn-172. Residues 249–271 form a helical membrane-spanning segment; the sequence is NFLTIYYCFILGANINLAMIASI. 2 N-linked (GlcNAc...) asparagine; by host glycosylation sites follow: Asn-352 and Asn-353.

This sequence belongs to the asfivirus MGF 360 family.

Its subcellular location is the host membrane. Plays a role in virus cell tropism, and may be required for efficient virus replication in macrophages. The polypeptide is Protein MGF 360-10L (African swine fever virus (isolate Tick/South Africa/Pretoriuskop Pr4/1996) (ASFV)).